Here is a 65-residue protein sequence, read N- to C-terminus: Conotoxin mr5.1b (65 aa).

Residues 1–19 form the signal peptide; the sequence is MRCVPVFVILLLLIASAPS. Positions 20–48 are excised as a propeptide; the sequence is VDARLKTKDDMPLPSSHANIKRTLQMLRN. E60 bears the 4-carboxyglutamate mark.

The protein belongs to the conotoxin T superfamily. In terms of processing, contains 2 disulfide bonds that can be either 'C1-C3, C2-C4' or 'C1-C4, C2-C3', since these disulfide connectivities have been observed for conotoxins with cysteine framework V (for examples, see AC P0DQQ7 and AC P81755). Expressed by the venom duct.

The protein resides in the secreted. This Conus marmoreus (Marble cone) protein is Conotoxin mr5.1b.